The primary structure comprises 256 residues: Type III pantothenate kinase (256 aa).

Residue 6-13 (DIGNTNIV) participates in ATP binding. Residue 107-110 (GADI) participates in substrate binding. Residue D109 is the Proton acceptor of the active site. D129 is a K(+) binding site. T132 contacts ATP. Residue T184 participates in substrate binding.

It belongs to the type III pantothenate kinase family. As to quaternary structure, homodimer. It depends on NH4(+) as a cofactor. K(+) is required as a cofactor.

It localises to the cytoplasm. The enzyme catalyses (R)-pantothenate + ATP = (R)-4'-phosphopantothenate + ADP + H(+). Its pathway is cofactor biosynthesis; coenzyme A biosynthesis; CoA from (R)-pantothenate: step 1/5. Its function is as follows. Catalyzes the phosphorylation of pantothenate (Pan), the first step in CoA biosynthesis. This is Type III pantothenate kinase from Bifidobacterium longum (strain DJO10A).